The primary structure comprises 141 residues: VLSEDDKNRVRTSVGKNPELPGEYGSETLTRMFAAHPTTKTYFPHFDLSSGSPNLKAHGKKVIDALDNAVEGLDDAVATLSKLSDLHAQKLRVDPANFKILSQCLLSTLANHRNPEFGPAVLASVDKFLCNVSEVLESKYR.

The tract at residues V1 to G22 is disordered. The Globin domain maps to V1–R141. An O2-binding site is contributed by H58. H87 contributes to the heme b binding site.

The protein belongs to the globin family. In terms of assembly, heterotetramer of two alpha chains and two beta chains. In terms of tissue distribution, red blood cells.

Involved in oxygen transport from the lung to the various peripheral tissues. The protein is Hemoglobin subunit alpha (HBA) of Vipera aspis (Aspic viper).